The sequence spans 296 residues: Ribonuclease H2 subunit A (296 aa).

In terms of domain architecture, RNase H type-2 spans 14-236 (PCLMGIDEAG…CTTHLKGEVE (223 aa)). Residues Asp20, Glu21, and Asp127 each contribute to the a divalent metal cation site.

Belongs to the RNase HII family. Eukaryotic subfamily. Mn(2+) is required as a cofactor. The cofactor is Mg(2+).

It carries out the reaction Endonucleolytic cleavage to 5'-phosphomonoester.. Functionally, catalytic subunit of RNase HII, an endonuclease that specifically degrades the RNA of RNA:DNA hybrids. Participates in DNA replication, possibly by mediating the removal of lagging-strand Okazaki fragment RNA primers during DNA replication. Mediates the excision of single ribonucleotides from DNA:RNA duplexes. The sequence is that of Ribonuclease H2 subunit A from Arabidopsis thaliana (Mouse-ear cress).